Here is a 166-residue protein sequence, read N- to C-terminus: Small ribosomal subunit protein uS5 (166 aa).

One can recognise an S5 DRBM domain in the interval 11 to 74 (LQEKLIAVNR…EKARRNMINV (64 aa)).

The protein belongs to the universal ribosomal protein uS5 family. Part of the 30S ribosomal subunit. Contacts proteins S4 and S8.

Its function is as follows. With S4 and S12 plays an important role in translational accuracy. Located at the back of the 30S subunit body where it stabilizes the conformation of the head with respect to the body. The polypeptide is Small ribosomal subunit protein uS5 (Enterobacter sp. (strain 638)).